Here is a 79-residue protein sequence, read N- to C-terminus: Small ribosomal subunit protein bS18 (79 aa).

This sequence belongs to the bacterial ribosomal protein bS18 family. Part of the 30S ribosomal subunit. Forms a tight heterodimer with protein bS6.

Functionally, binds as a heterodimer with protein bS6 to the central domain of the 16S rRNA, where it helps stabilize the platform of the 30S subunit. This Streptococcus agalactiae serotype Ia (strain ATCC 27591 / A909 / CDC SS700) protein is Small ribosomal subunit protein bS18.